The sequence spans 391 residues: MFLKNIFIALAIALLVDASPAKRSPGFVTLDFDVIKTPVNATGQEGKVKRQALPVTLNNEHVSYAADITIGSNKQKFNVIVDTGSSDLWVPDASVTCDKPRPGQSADFCKGKGIYTPKSSTTSQNLGTPFYIGYGDGSSSQGTLYKDTVGFGGASITKQVFADITKTSIPQGILGIGYKTNEAAGDYDNVPVTLKNQGVIAKNAYSLYLNSPNAATGQIIFGGVDKAKYSGSLIAVPVTSDRELRITLNSLKAVGKNINGNIDVLLDSGTTITYLQQDVAQDIIDAFQAELKSDGQGHTFYVTDCQTSGTVDFNFDNNVKISVPASEFTAPLSYANGQPYPKCQLLLGISDANILGDNFLRSAYLVYDLDDDKISLAQVKYTSASNIAALT.

Positions 1–18 (MFLKNIFIALAIALLVDA) are cleaved as a signal peptide. A propeptide spans 19-50 (SPAKRSPGFVTLDFDVIKTPVNATGQEGKVKR) (activation peptide). A glycan (N-linked (GlcNAc...) asparagine) is linked at asparagine 40. Positions 64-377 (YAADITIGSN…DLDDDKISLA (314 aa)) constitute a Peptidase A1 domain. Residue aspartate 82 is part of the active site. A disulfide bridge links cysteine 97 with cysteine 109. Residue aspartate 267 is part of the active site. The cysteines at positions 305 and 343 are disulfide-linked.

This sequence belongs to the peptidase A1 family. In terms of processing, O-glycosylated.

Its subcellular location is the secreted. It catalyses the reaction Preferential cleavage at the carboxyl of hydrophobic amino acids, but fails to cleave 15-Leu-|-Tyr-16, 16-Tyr-|-Leu-17 and 24-Phe-|-Phe-25 of insulin B chain. Activates trypsinogen, and degrades keratin.. The polypeptide is Candidapepsin-1 (SAP1) (Candida albicans (strain WO-1) (Yeast)).